A 523-amino-acid polypeptide reads, in one-letter code: Dynein regulatory complex subunit 3 (523 aa).

5 LRR repeats span residues 44-65, 66-87, 88-109, 110-131, and 132-153; these read DVLS…WQFE, NLRK…ENLA, HLVW…DTLV, NLED…DALV, and KLQV…IYLR. Residues 166–204 enclose the LRRCT domain; that stretch reads NPISEAEDYKMFICAYLPDLMYLDYRRIDDHTKKLAEAK. 2 coiled-coil regions span residues 208–242 and 366–391; these read SIDE…AFVE and MTLE…VDMV.

This sequence belongs to the DRC3 family. In terms of assembly, component of the nexin-dynein regulatory complex (N-DRC). Interacts with DRC1. Interacts with TCTE1/DRC5. Interacts with DRC7.

It is found in the cytoplasm. It localises to the cytoskeleton. The protein localises to the cilium axoneme. The protein resides in the cell projection. Its subcellular location is the cilium. It is found in the flagellum axoneme. It localises to the flagellum. In terms of biological role, component of the nexin-dynein regulatory complex (N-DRC) a key regulator of ciliary/flagellar motility which maintains the alignment and integrity of the distal axoneme and regulates microtubule sliding in motile axonemes. This is Dynein regulatory complex subunit 3 (DRC3) from Homo sapiens (Human).